Reading from the N-terminus, the 225-residue chain is Uridylate kinase (225 aa).

9–10 (GS) lines the ATP pocket. UMP is bound at residue Gly46. Residues Gly47 and Arg51 each coordinate ATP. UMP contacts are provided by residues Asp67 and 115-121 (THPAHTT). Residues Thr141, Asn142, Tyr147, and Asp150 each contribute to the ATP site.

Belongs to the UMP kinase family. In terms of assembly, homohexamer.

The protein resides in the cytoplasm. It carries out the reaction UMP + ATP = UDP + ADP. The protein operates within pyrimidine metabolism; CTP biosynthesis via de novo pathway; UDP from UMP (UMPK route): step 1/1. Its activity is regulated as follows. Inhibited by UTP. In terms of biological role, catalyzes the reversible phosphorylation of UMP to UDP. In Methanococcus maripaludis (strain C6 / ATCC BAA-1332), this protein is Uridylate kinase.